A 1052-amino-acid chain; its full sequence is Suppressor of RPS4-RLD 1 (1052 aa).

Position 2 is an N-acetylalanine (alanine 2). TPR repeat units lie at residues 39 to 72 (ILDICNRAFCYNQLELHKHVIKDCDKALLLEPFA) and 74 to 106 (QAFILKGRALLALGRKQEAVLVLEQGYKSALQQ). A coiled-coil region spans residues 107-136 (TADVKQLLELEELLKDARREIDGILKSHAT). Residues 131-181 (LKSHATESPQETPAYHSEKSDEKSDKLDNHESGASSNGNSHESSSELGEQS) form a disordered region. Positions 146 to 161 (HSEKSDEKSDKLDNHE) are enriched in basic and acidic residues. Over residues 162-181 (SGASSNGNSHESSSELGEQS) the composition is skewed to low complexity. TPR repeat units lie at residues 297–330 (VDFRLSRGIAQVNEGNYTKAISIFDKVLKEEPTY), 331–364 (PEALIGRGTAYAFQRELESAIADFTKAIQSNPAA), 365–398 (SEAWKRRGQARAALGEYVEAVEDLTKALVFEPNS), 400–432 (DVLHERGIVNFKSKDFTAAVKDLSICLKQEKDN), 433–466 (KSAYTYLGLAFASLGEYKKAEEAHLKSIQLDSNY), 468–500 (EAWLHLAQFYQELADHCKALECIEQVLQVDNRV), 502–534 (KAYHLRGLVFHGLGEHRKAIQELSIGLSIENTI), 535–567 (ECLYLRGSCYHAVGEYRDAVKDYDATVDVELDA), and 569–591 (EKFVLQCLAFYQKELALYTASKV). The segment at 704–739 (STKGTTKNGKKNRRRERTNILSQNRGGAGCSSSSFS) is disordered. Residues 966-986 (GTAVTGFVVLLGLLLAANMEF) form a helical membrane-spanning segment.

Multimer. Interacts with EDS1. Interacts with SNC1 and RPS4. Interacts (via TPR domain) with SGT1 (via TPR domain). Interacts with the TCP transcription factors TCP8, TCP14, TCP15, TCP20, TCP22 and TCP23. As to expression, ubiquitous. Not detected in very young flowers and older siliques.

The protein localises to the nucleus. The protein resides in the cytoplasm. It is found in the perinuclear region. It localises to the membrane. Its subcellular location is the microsome. Negative regulator of effector-triggered immunity associated with the EDS1 resistance pathway. May localize its interactors to a microsomal membrane. May therefore negatively regulate RPS4 and SNC1 translocation to the nucleus. Contributes to the regulation of RPS2 and RPS4 protein levels and negatively regulates SNC1 stability. This chain is Suppressor of RPS4-RLD 1, found in Arabidopsis thaliana (Mouse-ear cress).